Reading from the N-terminus, the 156-residue chain is Ribosome maturation factor RimP (156 aa).

The protein belongs to the RimP family.

Its subcellular location is the cytoplasm. Required for maturation of 30S ribosomal subunits. This chain is Ribosome maturation factor RimP, found in Lysinibacillus sphaericus (strain C3-41).